A 250-amino-acid polypeptide reads, in one-letter code: PF03932 family protein CutC (250 aa).

This sequence belongs to the CutC family.

The protein resides in the cytoplasm. The chain is PF03932 family protein CutC from Vibrio vulnificus (strain YJ016).